The sequence spans 299 residues: Ribosomal protein L11 methyltransferase (299 aa).

Residues T149, G170, D192, and N234 each contribute to the S-adenosyl-L-methionine site.

It belongs to the methyltransferase superfamily. PrmA family.

It is found in the cytoplasm. It carries out the reaction L-lysyl-[protein] + 3 S-adenosyl-L-methionine = N(6),N(6),N(6)-trimethyl-L-lysyl-[protein] + 3 S-adenosyl-L-homocysteine + 3 H(+). In terms of biological role, methylates ribosomal protein L11. This is Ribosomal protein L11 methyltransferase from Chromohalobacter salexigens (strain ATCC BAA-138 / DSM 3043 / CIP 106854 / NCIMB 13768 / 1H11).